The primary structure comprises 213 residues: Adenylate kinase (213 aa).

An ATP-binding site is contributed by 10 to 15; that stretch reads GSGKGT. The segment at 30 to 59 is NMP; that stretch reads STGDMLRTTVNKESVLGKNIQAIIKLGNLV. AMP contacts are provided by residues T31, R36, 57 to 59, 85 to 88, and Q92; these read NLV and GFPR. The LID stretch occupies residues 122–159; it reads GRMVHEPSGRIYHVTFNPPKQKGKDDITGENLIIRQDD. Residues R123 and 132 to 133 each bind ATP; that span reads IY. AMP contacts are provided by R156 and R167. C199 provides a ligand contact to ATP.

It belongs to the adenylate kinase family. In terms of assembly, monomer.

The protein localises to the cytoplasm. The enzyme catalyses AMP + ATP = 2 ADP. It functions in the pathway purine metabolism; AMP biosynthesis via salvage pathway; AMP from ADP: step 1/1. Functionally, catalyzes the reversible transfer of the terminal phosphate group between ATP and AMP. Plays an important role in cellular energy homeostasis and in adenine nucleotide metabolism. In Baumannia cicadellinicola subsp. Homalodisca coagulata, this protein is Adenylate kinase.